The chain runs to 148 residues: Protein SOB FIVE-LIKE 1 (148 aa).

Residues 1–10 (MESPRNHGGS) are compositionally biased toward basic and acidic residues. Disordered stretches follow at residues 1-20 (MESPRNHGGSEEEEYSSCES) and 33-148 (NDQS…SKTK). Residues 20 to 25 (SGWTMY) carry the SOFL-A motif. Positions 54-76 (DGYENDDGDTSDDGGDEESDDSM) are enriched in acidic residues. An SOFL-B motif is present at residues 75–84 (SMASDASSGP). Residues 91–101 (HINKHAARKNG) are compositionally biased toward basic residues. The span at 111 to 128 (QHTEKTISNEGEKSDLKA) shows a compositional bias: basic and acidic residues.

Belongs to the SOFL plant protein family. As to expression, predominantly expressed in the vascular tissues of seedlings, developing leaves, flowers and siliques, but barely detectable in roots and stems.

It localises to the cytoplasm. The protein resides in the nucleus. Its function is as follows. Involved in cytokinin-mediated development. Together with SOFL2, triggers the endogenous content of specific bioactive cytokinins derived from the biosynthetic intermediates trans-zeatin riboside monophosphate (tZRMP) and N(6)-(Delta(2)-isopentenyl)adenosine monophosphate (iPRMP) such as N-glucosides trans-zeatin 7-glucoside (tZ7G), cis-zeatin 7-glucoside (cZ7G) and N(6)-(Delta(2)-isopentenyl)adenine 7-glucoside (iP7G). The protein is Protein SOB FIVE-LIKE 1 of Arabidopsis thaliana (Mouse-ear cress).